Reading from the N-terminus, the 117-residue chain is Large ribosomal subunit protein uL18 (117 aa).

The protein belongs to the universal ribosomal protein uL18 family. Part of the 50S ribosomal subunit; part of the 5S rRNA/L5/L18/L25 subcomplex. Contacts the 5S and 23S rRNAs.

In terms of biological role, this is one of the proteins that bind and probably mediate the attachment of the 5S RNA into the large ribosomal subunit, where it forms part of the central protuberance. The chain is Large ribosomal subunit protein uL18 from Colwellia psychrerythraea (strain 34H / ATCC BAA-681) (Vibrio psychroerythus).